A 765-amino-acid polypeptide reads, in one-letter code: MSLQLLKALPHLRSATTAVRTQIARTTWSEHIATKVFFSTTTTKPTPSAPPPPPPTQPQQPAATTSWGTKKQNRKVKLRSAAAEFIMSNPEIEAQLAPLRERVQEQGNLVRDLKAKGAPEIDVKKAVAELKARKKLLEDKELALTPSVVSFDRAKMEDLLKRRFFYDQSFAIYGGITGQYDFGPMGCALKSNILALWRQYFALEEQMLEVDCSILTPEPVLKASGHVERFADLMVKDVKTGECFRLDHLIKQALEKLSKAKDATPALQAECEDIIIKLDGLNKQELAGVLAKYNIKSPLTGNDLTEPIEFNLMFATQIGPTGLVKGFLRPETAQGIFVNFKRLLEFNQGKLPFAVAQIGNSFRNEISPRSGLIRVREFTMAEIEHFCDPVLKDHPKFGNIKSEKLTLYSACNQMDGKSAAQVQIGEAVASKLVANETLGYYMARIQQFLLAIGIKPECLRFRQHMSNEMAHYACDCWDAEILTSYGWVECVGCADRSAYDLGQHTAATGVRLVAEKRLPAPKTVEVSEIVPNKQALGKTFKKEAKNITDALAKLSLEEITKVEEQLAGDGQYKLTTADGQSHDLGKDTISVKHSTKTVHVEEFIPSVVEPSFGIGRIMYSLLEHSFQCRDGDEQRCYFTLPPLVAPIKCSILPLSNNTDFQPYTQKLSSALTKAELSHKVDDSSGSIGRRYARTDEIAIPYGITVDFDTLKEPHTVTLRDRNTMKQVRVGLEEVVGVVKDLSTARTTWESVTEQYPLFEQQEASK.

The N-terminal 87 residues, 1–87 (MSLQLLKALP…LRSAAAEFIM (87 aa)), are a transit peptide targeting the mitochondrion. The disordered stretch occupies residues 41–73 (TTTKPTPSAPPPPPPTQPQQPAATTSWGTKKQN). Residues 47–58 (PSAPPPPPPTQP) show a composition bias toward pro residues. Positions 95-151 (QLAPLRERVQEQGNLVRDLKAKGAPEIDVKKAVAELKARKKLLEDKELALTPSVVSF) constitute a WHEP-TRS domain. Glu-331 is a glycine binding site. Residues 363-365 (RNE) and 374-375 (RV) each bind ATP. Residue Glu-382 coordinates glycine. Residue 489–490 (EC) participates in ATP binding. Glycine is bound at residue 609–611 (EPS). Arg-616 provides a ligand contact to ATP.

It belongs to the class-II aminoacyl-tRNA synthetase family. In terms of assembly, homodimer.

The protein localises to the mitochondrion. It localises to the cytoplasm. Its subcellular location is the cell projection. It is found in the axon. It carries out the reaction 2 ATP + H(+) = P(1),P(4)-bis(5'-adenosyl) tetraphosphate + diphosphate. The enzyme catalyses tRNA(Gly) + glycine + ATP = glycyl-tRNA(Gly) + AMP + diphosphate. Functionally, catalyzes the ATP-dependent ligation of glycine to the 3'-end of its cognate tRNA, via the formation of an aminoacyl-adenylate intermediate (Gly-AMP). Also produces diadenosine tetraphosphate (Ap4A), a universal pleiotropic signaling molecule needed for cell regulation pathways, by direct condensation of 2 ATPs. Thereby, may play a special role in Ap4A homeostasis. Required for terminal arborization of both dendrites and axons during development. The protein is Glycine--tRNA ligase of Drosophila melanogaster (Fruit fly).